Consider the following 411-residue polypeptide: O-glucosyltransferase rumi (411 aa).

An N-terminal signal peptide occupies residues 1-20 (MLINHLIVVLLISLVGTGGA). 4 disulfides stabilise this stretch: Cys64-Cys75, Cys73-Cys378, Cys120-Cys126, and Cys282-Cys305. Asp151 functions as the Proton donor/acceptor in the catalytic mechanism. The segment at 192–197 (ATKLHP) is interaction with the consensus sequence C-X-S-X-[PA]-C in peptide substrates. Residues 229–233 (RGSRT), Arg237, 276–278 (VSF), and 294–298 (AASFR) contribute to the UDP-alpha-D-glucose site. A Prevents secretion from ER motif is present at residues 408–411 (KDEL).

The protein belongs to the glycosyltransferase 90 family.

It is found in the endoplasmic reticulum lumen. It participates in protein modification; protein glycosylation. In terms of biological role, protein O-glucosyltransferase. Catalyzes the reaction that attaches glucose through an O-glycosidic linkage to a conserved serine residue found in the consensus sequence C-X-S-X-[PA]-C in epidermal growth factor-like repeats. Regulates Notch signaling by glucosylating Notch in the ER, glucosylation is required for the correct folding and cleavage of Notch. This Drosophila melanogaster (Fruit fly) protein is O-glucosyltransferase rumi.